The primary structure comprises 215 residues: Pre-hexon-linking protein VIII (215 aa).

Thr62 carries the phosphothreonine; by host modification. The propeptide occupies 110 to 150; the sequence is AWINYKNGSVRYEAPLQLAEEQVGGPLNAFAIKHQLQLAGG.

The protein belongs to the adenoviridae hexon-linking protein family. In terms of assembly, interacts with the peripentonal hexons as well as the hexons in the facets. Part of a complex composed of the core-capsid bridging protein, the endosome lysis protein VI and the hexon-linking protein VIII; these interactions bridge the virus core to the capsid. Cleaved by the viral protease during virion maturation. May cause the middle segment to be shed from the capsid.

Its subcellular location is the virion. The protein localises to the host nucleus. Its function is as follows. Structural component of the virion that acts as a cement protein on the capsid interior and which glue the peripentonal hexons and group-of-nine hexons together. The protein is Pre-hexon-linking protein VIII of Murine adenovirus A serotype 1 (MAdV-1).